A 400-amino-acid polypeptide reads, in one-letter code: Chalcone synthase 7 (400 aa).

The active site involves Cys-168.

The protein belongs to the thiolase-like superfamily. Chalcone/stilbene synthases family.

The enzyme catalyses (E)-4-coumaroyl-CoA + 3 malonyl-CoA + 3 H(+) = 2',4,4',6'-tetrahydroxychalcone + 3 CO2 + 4 CoA. The protein operates within secondary metabolite biosynthesis; flavonoid biosynthesis. In terms of biological role, the primary product of this enzyme is 4,2',4',6'-tetrahydroxychalcone (also termed naringenin-chalcone or chalcone) which can under specific conditions spontaneously isomerize into naringenin. The polypeptide is Chalcone synthase 7 (CHS7) (Sorghum bicolor (Sorghum)).